Here is a 398-residue protein sequence, read N- to C-terminus: Elongation factor Tu (398 aa).

The tr-type G domain maps to 10 to 207 (KPHVNIGTIG…TVDEYIPEPE (198 aa)). A G1 region spans residues 19–26 (GHVDHGKT). 19 to 26 (GHVDHGKT) serves as a coordination point for GTP. A Mg(2+)-binding site is contributed by Thr26. Residues 63–67 (GITIN) form a G2 region. Residues 84 to 87 (DAPG) form a G3 region. GTP is bound by residues 84 to 88 (DAPGH) and 139 to 142 (NKVD). Residues 139–142 (NKVD) are G4. Residues 177-179 (SAL) are G5.

It belongs to the TRAFAC class translation factor GTPase superfamily. Classic translation factor GTPase family. EF-Tu/EF-1A subfamily. In terms of assembly, monomer.

Its subcellular location is the cytoplasm. The catalysed reaction is GTP + H2O = GDP + phosphate + H(+). Its function is as follows. GTP hydrolase that promotes the GTP-dependent binding of aminoacyl-tRNA to the A-site of ribosomes during protein biosynthesis. The protein is Elongation factor Tu of Streptococcus suis (strain 98HAH33).